Consider the following 798-residue polypeptide: Integrin beta-1 (798 aa).

Positions 1 to 20 (MNLQLIFWIGLISSVCCVFG) are cleaved as a signal peptide. Over 21-728 (QADENRCLKA…ETPECPTGPD (708 aa)) the chain is Extracellular. One can recognise a PSI domain in the interval 26–76 (RCLKANAKSCGECIQAGPNCGWCTNSTFLQEGMPTSARCDDLEALKKKGCH). Intrachain disulfides connect C27–C45, C35–C464, C38–C64, C48–C75, C207–C213, C261–C301, C401–C415, C435–C462, C466–C486, C477–C489, C491–C500, C502–C533, C516–C531, C525–C536, C538–C553, C555–C576, C560–C574, C568–C579, C581–C590, C592–C615, C599–C613, C607–C618, C620–C630, C633–C636, C640–C691, C646–C665, C649–C661, and C699–C723. The N-linked (GlcNAc...) asparagine glycan is linked to N50. The span at 75 to 91 (CHPNDIENPRGSKDIKK) shows a compositional bias: basic and acidic residues. The tract at residues 75–105 (CHPNDIENPRGSKDIKKNKNVTNRSKGTAEK) is disordered. N-linked (GlcNAc...) asparagine glycans are attached at residues N94 and N97. One can recognise a VWFA domain in the interval 140 to 378 (DYPIDLYYLM…QLIIDAYNSL (239 aa)). Residues S152 and S154 each coordinate Mg(2+). S154, D157, D158, and E189 together coordinate Ca(2+). A CX3CL1-binding region spans residues 207–213 (CTNEQNC). Residue N212 is glycosylated (N-linked (GlcNAc...) asparagine). 4 residues coordinate Ca(2+): N244, D246, P248, and E249. Mg(2+) is bound at residue E249. N269 is a glycosylation site (N-linked (GlcNAc...) asparagine). Residues 295–314 (LPNDGQCHLENDVYTMSHYY) are CX3CL1-binding. Ca(2+) is bound at residue A362. N363, N406, and N417 each carry an N-linked (GlcNAc...) asparagine glycan. The interaction with TMEM182 stretch occupies residues 383 to 465 (ILENSKLPEG…IILQFICECE (83 aa)). 4 I-EGF domains span residues 466-501 (CQGE…RHCE), 502-554 (CSTD…KFCE), 555-591 (CDNF…SACD), and 592-631 (CSLD…PTCE). N-linked (GlcNAc...) asparagine glycosylation occurs at N481. N520 is a glycosylation site (N-linked (GlcNAc...) asparagine). An N-linked (GlcNAc...) asparagine glycan is attached at N584. N-linked (GlcNAc...) asparagine glycosylation occurs at N669. A helical transmembrane segment spans residues 729 to 749 (IIPIVAGVVAGIVLIGLALLL). Over 750–798 (IWKLLMIIHDRREFAKFEKEKMNAKWDTGENPIYKSAVTTVVNPKYEGK) the chain is Cytoplasmic. The signal for sorting from recycling endosomes; interaction with ACAP1 stretch occupies residues 762-767 (EFAKFE). Position 777 is a phosphothreonine (T777). Residue Y783 is modified to Phosphotyrosine. S785 carries the post-translational modification Phosphoserine. An interaction with ITGB1BP1 region spans residues 785–792 (SAVTTVVN). Phosphothreonine is present on T789. An N6-acetyllysine; alternate modification is found at K794. A Glycyl lysine isopeptide (Lys-Gly) (interchain with G-Cter in SUMO1); alternate cross-link involves residue K794.

It belongs to the integrin beta chain family. As to quaternary structure, interacts with seprase FAP (seprase); the interaction occurs at the cell surface of invadopodia membrane in a collagen-dependent manner. Heterodimer of an alpha and a beta subunit. Beta-1 associates with either alpha-1, alpha-2, alpha-3, alpha-4, alpha-5, alpha-6, alpha-7, alpha-8, alpha-9, alpha-10, alpha-11 or alpha-V. ITGA6:ITGB1 is found in a complex with CD9; interaction takes place in oocytes and is involved in sperm-egg fusion. Binds LGALS3BP and NMRK2, when associated with alpha-7, but not with alpha-5. Interacts with FLNB, FLNC and RANBP9. Interacts with KRT1 in the presence of RACK1 and SRC. Interacts with JAML; integrin alpha-4/beta-1 may regulate leukocyte to endothelial cells adhesion by controlling JAML homodimerization. Interacts with RAB21. Interacts (via the cytoplasmic region) with RAB25 (via the hypervariable C-terminal region). Interacts with MYO10. Interacts with ITGB1BP1 (via C-terminal region); the interaction is a prerequisite for focal adhesion disassembly. Interacts with TLN1; the interaction is prevented by competitive binding of ITGB1BP1. Interacts with ACAP1; required for ITGB1 recycling. Interacts with ASAP3. Interacts with FERMT2; the interaction is inhibited in presence of ITGB1BP1. Interacts with DAB2. Interacts with FGR and HCK. Interacts with EMP2; the interaction may be direct or indirect and ITGB1 has a heterodimer form. ITGA5:ITGB1 interacts with CCN3. ITGA4:ITGB1 is found in a ternary complex with CX3CR1 and CX3CL1. ITGA5:ITGB1 interacts with FBN1. ITGA5:ITGB1 interacts with IL1B. Interacts with MDK. ITGA4:ITGB1 interacts with MDK; this interaction mediates MDK-induced osteoblast cells migration through PXN phosphorylation. ITGA6:ITGB1 interacts with MDK; this interaction mediates MDK-induced neurite-outgrowth. ITGA5:ITGB1 interacts with ACE2. Interacts with TMEM182 and LAMB1. Interacts with tensin TNS3; TNS3 also interacts with PEAK1, thus acting as an adapter molecule to bridge the association of PEAK1 with ITGB1. Interacts with tensin TNS4; the interaction displaces tensin TNS3 from the ITGB1 cytoplasmic tail and promotes ITGB1 stability. Integrin ITGA9:ITGB1 interacts with SPP1/OPN (via N-terminus). Integrin ITGA9:ITGB1 interacts with TNC/TNFN3 (via the 3rd Fibronectin type-III domain). Integrins ITGA4:ITGB1 and ITGA9:ITGB1 interact with SVEP1 (via Sushi domain 21); thereby inhibit Ca(2+) intracellular signaling and as a result repress vasocontraction. ITGA4:ITGB1 and ITGA5:ITGB1 interacts with SELP. Interacts with CD248. ITGA5:ITGB1 interacts with IGFBP1. ITGA4:ITGB1 interacts with BCAM. Interacts with ADGRG6. In terms of assembly, interacts with the C-terminal region of FLNC. Interacts with filamin FLNA isoform 3/VAR-1. Interacts with ACE2. Interacts with alpha-7B in cardiomyocytes of adult heart and alpha-7A and alpha-7B in adult skeletal muscle. Interacts with filamin FLNA isoform 3/VAR-1.

It localises to the cell membrane. Its subcellular location is the cell projection. It is found in the invadopodium membrane. The protein resides in the ruffle membrane. The protein localises to the recycling endosome. It localises to the melanosome. Its subcellular location is the lamellipodium. It is found in the ruffle. The protein resides in the cell junction. The protein localises to the focal adhesion. It localises to the sarcolemma. Integrins alpha-1/beta-1, alpha-2/beta-1, alpha-10/beta-1 and alpha-11/beta-1 are receptors for collagen. Integrins alpha-1/beta-1 and alpha-2/beta-2 recognize the proline-hydroxylated sequence G-F-P-G-E-R in collagen. Integrins alpha-2/beta-1, alpha-3/beta-1, alpha-4/beta-1, alpha-5/beta-1, alpha-8/beta-1, alpha-10/beta-1, alpha-11/beta-1 and alpha-V/beta-1 are receptors for fibronectin. Alpha-4/beta-1 recognizes one or more domains within the alternatively spliced CS-1 and CS-5 regions of fibronectin. Integrin alpha-5/beta-1 is a receptor for fibrinogen. Integrin alpha-1/beta-1, alpha-2/beta-1, alpha-6/beta-1 and alpha-7/beta-1 are receptors for lamimin. Integrin alpha-6/beta-1 (ITGA6:ITGB1) is present in oocytes and is involved in sperm-egg fusion. Integrin alpha-4/beta-1 is a receptor for VCAM1 and recognizes the sequence Q-I-D-S in VCAM1. Integrin alpha-9/beta-1 is a receptor for VCAM1, cytotactin and osteopontin. It recognizes the sequence A-E-I-D-G-I-E-L in cytotactin. Integrin alpha-3/beta-1 is a receptor for epiligrin, thrombospondin and CSPG4. Integrin alpha-3/beta-1 provides a docking site for FAP (seprase) at invadopodia plasma membranes in a collagen-dependent manner and hence may participate in the adhesion, formation of invadopodia and matrix degradation processes, promoting cell invasion. Alpha-3/beta-1 may mediate with LGALS3 the stimulation by CSPG4 of endothelial cells migration. Integrin alpha-V/beta-1 is a receptor for vitronectin. Beta-1 integrins recognize the sequence R-G-D in a wide array of ligands. When associated with alpha-7/beta-1 integrin, regulates cell adhesion and laminin matrix deposition. Involved in promoting endothelial cell motility and angiogenesis. Involved in osteoblast compaction through the fibronectin fibrillogenesis cell-mediated matrix assembly process and the formation of mineralized bone nodules. May be involved in up-regulation of the activity of kinases such as PKC via binding to KRT1. Together with KRT1 and RACK1, serves as a platform for SRC activation or inactivation. Plays a mechanistic adhesive role during telophase, required for the successful completion of cytokinesis. ITGA4:ITGB1 binds to fractalkine (CX3CL1) and may act as its coreceptor in CX3CR1-dependent fractalkine signaling. ITGA4:ITGB1 and ITGA5:ITGB1 bind to PLA2G2A via a site (site 2) which is distinct from the classical ligand-binding site (site 1) and this induces integrin conformational changes and enhanced ligand binding to site 1. ITGA5:ITGB1 acts as a receptor for fibrillin-1 (FBN1) and mediates R-G-D-dependent cell adhesion to FBN1. ITGA5:ITGB1 acts as a receptor for fibronectin FN1 and mediates R-G-D-dependent cell adhesion to FN1. ITGA5:ITGB1 is a receptor for IL1B and binding is essential for IL1B signaling. ITGA5:ITGB3 is a receptor for soluble CD40LG and is required for CD40/CD40LG signaling. Plays an important role in myoblast differentiation and fusion during skeletal myogenesis. ITGA9:ITGB1 may play a crucial role in SVEP1/polydom-mediated myoblast cell adhesion. Integrins ITGA9:ITGB1 and ITGA4:ITGB1 repress PRKCA-mediated L-type voltage-gated channel Ca(2+) influx and ROCK-mediated calcium sensitivity in vascular smooth muscle cells via their interaction with SVEP1, thereby inhibit vasocontraction. In Bos taurus (Bovine), this protein is Integrin beta-1 (ITGB1).